A 202-amino-acid chain; its full sequence is Oocyte-secreted protein 1 (202 aa).

An N-terminal signal peptide occupies residues 1 to 21 (MKPFVGLLGLLLLLSFMKTCA). The disordered stretch occupies residues 157-183 (QPNLSTSSEDHHVSTEPWASETSRSEA).

It belongs to the PLAC1 family. As to expression, expressed in oocytes in primary through antral-stage follicles. Expressed in liver and ovary.

It is found in the secreted. Its function is as follows. May be involved in cell differentiation. The protein is Oocyte-secreted protein 1 (Oosp1) of Mus musculus (Mouse).